We begin with the raw amino-acid sequence, 240 residues long: UDP-2,3-diacylglucosamine hydrolase (240 aa).

Asp-8, His-10, Asp-41, Asn-79, and His-114 together coordinate Mn(2+). A substrate-binding site is contributed by 79-80 (NR). Substrate is bound by residues Asp-122, Ser-160, Asn-164, Lys-167, and His-195. Residues His-195 and His-197 each coordinate Mn(2+).

It belongs to the LpxH family. Mn(2+) is required as a cofactor.

It localises to the cell inner membrane. The catalysed reaction is UDP-2-N,3-O-bis[(3R)-3-hydroxytetradecanoyl]-alpha-D-glucosamine + H2O = 2-N,3-O-bis[(3R)-3-hydroxytetradecanoyl]-alpha-D-glucosaminyl 1-phosphate + UMP + 2 H(+). Its pathway is glycolipid biosynthesis; lipid IV(A) biosynthesis; lipid IV(A) from (3R)-3-hydroxytetradecanoyl-[acyl-carrier-protein] and UDP-N-acetyl-alpha-D-glucosamine: step 4/6. Its function is as follows. Hydrolyzes the pyrophosphate bond of UDP-2,3-diacylglucosamine to yield 2,3-diacylglucosamine 1-phosphate (lipid X) and UMP by catalyzing the attack of water at the alpha-P atom. Involved in the biosynthesis of lipid A, a phosphorylated glycolipid that anchors the lipopolysaccharide to the outer membrane of the cell. This Escherichia coli (strain SE11) protein is UDP-2,3-diacylglucosamine hydrolase.